The following is a 323-amino-acid chain: tRNA U34 carboxymethyltransferase (323 aa).

Carboxy-S-adenosyl-L-methionine-binding positions include K91, W105, K110, G130, 152–154 (DPT), 181–182 (IE), M196, Y200, and R315.

Belongs to the class I-like SAM-binding methyltransferase superfamily. CmoB family. Homotetramer.

The catalysed reaction is carboxy-S-adenosyl-L-methionine + 5-hydroxyuridine(34) in tRNA = 5-carboxymethoxyuridine(34) in tRNA + S-adenosyl-L-homocysteine + H(+). Functionally, catalyzes carboxymethyl transfer from carboxy-S-adenosyl-L-methionine (Cx-SAM) to 5-hydroxyuridine (ho5U) to form 5-carboxymethoxyuridine (cmo5U) at position 34 in tRNAs. This is tRNA U34 carboxymethyltransferase from Escherichia coli O81 (strain ED1a).